The primary structure comprises 128 residues: Small ribosomal subunit protein uS12 (128 aa).

The disordered stretch occupies residues 1 to 29 (MPTINQLIRKGREPKERKSKSPALMGNPQ). D89 carries the 3-methylthioaspartic acid modification. A disordered region spans residues 106 to 128 (GVEGRRQGRSKYGAKRPKEGGKK).

Belongs to the universal ribosomal protein uS12 family. As to quaternary structure, part of the 30S ribosomal subunit. Contacts proteins S8 and S17. May interact with IF1 in the 30S initiation complex.

With S4 and S5 plays an important role in translational accuracy. Its function is as follows. Interacts with and stabilizes bases of the 16S rRNA that are involved in tRNA selection in the A site and with the mRNA backbone. Located at the interface of the 30S and 50S subunits, it traverses the body of the 30S subunit contacting proteins on the other side and probably holding the rRNA structure together. The combined cluster of proteins S8, S12 and S17 appears to hold together the shoulder and platform of the 30S subunit. In Dictyoglomus turgidum (strain DSM 6724 / Z-1310), this protein is Small ribosomal subunit protein uS12.